The following is a 350-amino-acid chain: Phospho-2-dehydro-3-deoxyheptonate aldolase, Phe-sensitive (350 aa).

Lys244 carries the post-translational modification N6-acetyllysine.

This sequence belongs to the class-I DAHP synthase family. As to quaternary structure, homotetramer.

It catalyses the reaction D-erythrose 4-phosphate + phosphoenolpyruvate + H2O = 7-phospho-2-dehydro-3-deoxy-D-arabino-heptonate + phosphate. It functions in the pathway metabolic intermediate biosynthesis; chorismate biosynthesis; chorismate from D-erythrose 4-phosphate and phosphoenolpyruvate: step 1/7. Functionally, stereospecific condensation of phosphoenolpyruvate (PEP) and D-erythrose-4-phosphate (E4P) giving rise to 3-deoxy-D-arabino-heptulosonate-7-phosphate (DAHP). This Escherichia coli O157:H7 protein is Phospho-2-dehydro-3-deoxyheptonate aldolase, Phe-sensitive (aroG).